Consider the following 239-residue polypeptide: MGKSLIQQRRGKGTTTFRAPSHRYRGAVRYVPLNLTKEKTLVGKVVEILHDPGRTAPVARVKFENGMEKLIIAPEGILVGEEIAIGPNAPIKIGNTLPLAMIPEGSYVYDIEGTPGDGGKYVRAGGVYALVVSREKDKVIVQLPSGELKQFNPMCRATIGVVAGGGRLEKPIVKAGKAYYIAKARNRFWPKPRGVKMNAVNHPHGGKEHHIGRPSTVSRRAPPGRKVGHIAARRTGRRK.

Residues 200–239 (VNHPHGGKEHHIGRPSTVSRRAPPGRKVGHIAARRTGRRK) form a disordered region. The segment covering 222-239 (PPGRKVGHIAARRTGRRK) has biased composition (basic residues).

Belongs to the universal ribosomal protein uL2 family. In terms of assembly, part of the 50S ribosomal subunit. Forms a bridge to the 30S subunit in the 70S ribosome.

In terms of biological role, one of the primary rRNA binding proteins. Required for association of the 30S and 50S subunits to form the 70S ribosome, for tRNA binding and peptide bond formation. It has been suggested to have peptidyltransferase activity; this is somewhat controversial. Makes several contacts with the 16S rRNA in the 70S ribosome. The protein is Large ribosomal subunit protein uL2 of Thermococcus onnurineus (strain NA1).